We begin with the raw amino-acid sequence, 125 residues long: Protein ApaG (125 aa).

Positions 1 to 125 (MFTSSKVAIQ…FRLAIPTLIN (125 aa)) constitute an ApaG domain.

This is Protein ApaG from Proteus mirabilis (strain HI4320).